The following is a 193-amino-acid chain: Molybdenum cofactor guanylyltransferase (193 aa).

GTP contacts are provided by residues 8–10 (LAG), Lys21, Asp67, and Asp98. Asp98 is a Mg(2+) binding site.

This sequence belongs to the MobA family. As to quaternary structure, monomer. Mg(2+) is required as a cofactor.

The protein resides in the cytoplasm. It carries out the reaction Mo-molybdopterin + GTP + H(+) = Mo-molybdopterin guanine dinucleotide + diphosphate. Transfers a GMP moiety from GTP to Mo-molybdopterin (Mo-MPT) cofactor (Moco or molybdenum cofactor) to form Mo-molybdopterin guanine dinucleotide (Mo-MGD) cofactor. The protein is Molybdenum cofactor guanylyltransferase of Cereibacter sphaeroides (strain ATCC 17023 / DSM 158 / JCM 6121 / CCUG 31486 / LMG 2827 / NBRC 12203 / NCIMB 8253 / ATH 2.4.1.) (Rhodobacter sphaeroides).